We begin with the raw amino-acid sequence, 327 residues long: Auxin-responsive protein IAA18 (327 aa).

3 disordered regions span residues 26–45 (VKEA…DEDK), 52–98 (GLPG…IGTT), and 180–202 (NLTN…DDKA). The EAR-like (transcriptional repression) motif lies at 49–53 (LKLGL). Residues 58–69 (QEERAADSREKI) are compositionally biased toward basic and acidic residues. Residues 70-82 (QQQQRESSSEPSI) are compositionally biased toward low complexity. The segment covering 180–189 (NLTNGSSFKQ) has biased composition (polar residues). A compositionally biased stretch (basic and acidic residues) spans 190 to 202 (SPERQNDEADDKA). In terms of domain architecture, PB1 spans 209 to 313 (RPLVKINMDG…TVKRLRVMRR (105 aa)).

This sequence belongs to the Aux/IAA family. Homodimers and heterodimers. As to expression, highly expressed in flowers. Expressed in roots and etiolated seedlings.

It is found in the nucleus. In terms of biological role, aux/IAA proteins are short-lived transcriptional factors that function as repressors of early auxin response genes at low auxin concentrations. The sequence is that of Auxin-responsive protein IAA18 (IAA18) from Oryza sativa subsp. japonica (Rice).